Here is a 617-residue protein sequence, read N- to C-terminus: Threonine--tRNA ligase (617 aa).

The segment at 209–502 is catalytic; that stretch reads DHRRLGKDLD…MTENYAGDFP (294 aa). Zn(2+)-binding residues include Cys302, His353, and His479.

The protein belongs to the class-II aminoacyl-tRNA synthetase family. As to quaternary structure, homodimer. Zn(2+) is required as a cofactor.

It is found in the cytoplasm. It carries out the reaction tRNA(Thr) + L-threonine + ATP = L-threonyl-tRNA(Thr) + AMP + diphosphate + H(+). Catalyzes the attachment of threonine to tRNA(Thr) in a two-step reaction: L-threonine is first activated by ATP to form Thr-AMP and then transferred to the acceptor end of tRNA(Thr). Also edits incorrectly charged L-seryl-tRNA(Thr). This Synechococcus sp. (strain CC9311) protein is Threonine--tRNA ligase.